Reading from the N-terminus, the 406-residue chain is uncharacterized protein (406 aa).

Belongs to the glycosyltransferase group 1 family. Glycosyltransferase 4 subfamily.

This is an uncharacterized protein from Methanocaldococcus jannaschii (strain ATCC 43067 / DSM 2661 / JAL-1 / JCM 10045 / NBRC 100440) (Methanococcus jannaschii).